A 347-amino-acid polypeptide reads, in one-letter code: Protein RecA (347 aa).

64 to 71 (GPESSGKT) contributes to the ATP binding site.

This sequence belongs to the RecA family.

Its subcellular location is the cytoplasm. Its function is as follows. Can catalyze the hydrolysis of ATP in the presence of single-stranded DNA, the ATP-dependent uptake of single-stranded DNA by duplex DNA, and the ATP-dependent hybridization of homologous single-stranded DNAs. It interacts with LexA causing its activation and leading to its autocatalytic cleavage. The protein is Protein RecA of Bartonella quintana (strain Toulouse) (Rochalimaea quintana).